The sequence spans 315 residues: Cell division protein FtsZ (315 aa).

Residues 55 to 57, glutamate 98, arginine 102, and aspartate 146 contribute to the GTP site; that span reads GTG.

It belongs to the FtsZ family. Homodimer. Polymerizes to form a dynamic ring structure in a strictly GTP-dependent manner. Interacts directly with several other division proteins.

The protein localises to the cytoplasm. Functionally, essential cell division protein that forms a contractile ring structure (Z ring) at the future cell division site. The regulation of the ring assembly controls the timing and the location of cell division. One of the functions of the FtsZ ring is to recruit other cell division proteins to the septum to produce a new cell wall between the dividing cells. Binds GTP and shows GTPase activity. The polypeptide is Cell division protein FtsZ (Wolbachia pipientis).